A 732-amino-acid polypeptide reads, in one-letter code: Acylamino-acid-releasing enzyme (732 aa).

An N-acetylmethionine modification is found at methionine 1. Phosphoserine is present on residues serine 185 and serine 187. Catalysis depends on charge relay system residues serine 587, aspartate 675, and histidine 707.

Belongs to the peptidase S9C family. As to quaternary structure, homotetramer.

It localises to the cytoplasm. The enzyme catalyses Cleavage of an N-acetyl or N-formyl amino acid from the N-terminus of a polypeptide.. With respect to regulation, homotetramerization is required for activity. Tetramerization results in the formation of a gated channel which is involved in substrate selection and substrate access to the catalytic sites. In terms of biological role, this enzyme catalyzes the hydrolysis of the N-terminal peptide bond of an N-acetylated peptide to generate an N-acetylated amino acid and a peptide with a free N-terminus. It preferentially cleaves off Ac-Ala, Ac-Met and Ac-Ser. Also, involved in the degradation of oxidized and glycated proteins. In Mus musculus (Mouse), this protein is Acylamino-acid-releasing enzyme (Apeh).